The chain runs to 692 residues: MLSSITVRTKSGRLIPLVLAATLLAACSGRVSTTPPAPVQSEATASADYYLQQMQQSSDDSKADWQLLAIRALLREGKLPQAADLLGQLPSQLSEAQQLEQRLVSAELEIARHAPQQAQAILTKLDVAQLSQAQQLRYYQAVIAAAQGKTTLAQIRAYIALQPLLTQEKQRKANIDATWAALSTLTPADLNGMVINANEDILRGWLDLLRLYQDNRQDPALLKAAIKDWQTRYPNNPAATLLPSALDNILHLQSASTASIALLLPLNGQAKVFSDAIEAGFNAAKNGAFSQNSAPTAAAATDNGAPASSGTLAAATTPSAPADVNAAGAVSPSAQGTDAAAPAAPNDSAALPPLDAAGDPIAPSVSPGNPDAHIQVYDTSSQPLPALLSQAQQAGASLVVGPLLKNNVDQLNTLSTPLNILALNQPEQVQNHPNICYFALSPEDEARDAARHIWAQGKRTPLLLIPRSPLGDRVAKAFATEWQSLGGGSVLQQTFGSSAELRSTINGGTGIRLTGQPVSIAPAQPASVTIAGLTIPAPVQPPVASGGGVDAVYIIATPAEITLIKPMIDLANGTHNGIGLYASSRSYQAGAGPDFRLEMEGVQFSDIPLLAGSDPAILQQAPAQYRNDYSLMRLYAMGADAWTLANHFAQLRQIPGFQVQGATGTLSANDNCVIQRKLPWLQYQKGSIVPVQ.

The signal sequence occupies residues 1-26 (MLSSITVRTKSGRLIPLVLAATLLAA). The N-palmitoyl cysteine moiety is linked to residue C27. The S-diacylglycerol cysteine moiety is linked to residue C27. 2 disordered regions span residues 297–316 (AAAA…AAAT) and 324–373 (VNAA…PDAH). The span at 332–363 (PSAQGTDAAAPAAPNDSAALPPLDAAGDPIAP) shows a compositional bias: low complexity.

It belongs to the LpoA family. Interacts with PBP1a.

It localises to the cell outer membrane. Its function is as follows. Regulator of peptidoglycan synthesis that is essential for the function of penicillin-binding protein 1A (PBP1a). The protein is Penicillin-binding protein activator LpoA of Edwardsiella piscicida.